We begin with the raw amino-acid sequence, 461 residues long: Glyceraldehyde-3-phosphate dehydrogenase-like protein (461 aa).

Thr-421 carries the phosphothreonine modification.

Belongs to the glyceraldehyde-3-phosphate dehydrogenase family.

This chain is Glyceraldehyde-3-phosphate dehydrogenase-like protein (gap2), found in Pseudomonas aeruginosa (strain UCBPP-PA14).